We begin with the raw amino-acid sequence, 272 residues long: Shikimate dehydrogenase (NADP(+)) (272 aa).

Residues 14–16 (SKS) and Thr61 contribute to the shikimate site. Lys65 acts as the Proton acceptor in catalysis. Residue Glu77 participates in NADP(+) binding. Shikimate is bound by residues Asn86 and Asp102. NADP(+) contacts are provided by residues 126–130 (GAGGA), 149–154 (NRTVSR), and Met213. Residue Tyr215 participates in shikimate binding. Gly237 serves as a coordination point for NADP(+).

This sequence belongs to the shikimate dehydrogenase family. In terms of assembly, homodimer.

It catalyses the reaction shikimate + NADP(+) = 3-dehydroshikimate + NADPH + H(+). The protein operates within metabolic intermediate biosynthesis; chorismate biosynthesis; chorismate from D-erythrose 4-phosphate and phosphoenolpyruvate: step 4/7. Functionally, involved in the biosynthesis of the chorismate, which leads to the biosynthesis of aromatic amino acids. Catalyzes the reversible NADPH linked reduction of 3-dehydroshikimate (DHSA) to yield shikimate (SA). This chain is Shikimate dehydrogenase (NADP(+)), found in Shigella dysenteriae serotype 1 (strain Sd197).